The following is a 152-amino-acid chain: Protein SprT-like (152 aa).

The region spanning 7-147 (QRLVEEVSLQ…CGKCKGKLKP (141 aa)) is the SprT-like domain. Zn(2+) is bound at residue H67. Residue E68 is part of the active site. Position 71 (H71) interacts with Zn(2+).

The protein belongs to the SprT family. Zn(2+) serves as cofactor.

Its subcellular location is the cytoplasm. In Bacillus cereus (strain G9842), this protein is Protein SprT-like.